The sequence spans 123 residues: Small ribosomal subunit protein uS12 (123 aa).

The residue at position 89 (aspartate 89) is a 3-methylthioaspartic acid.

This sequence belongs to the universal ribosomal protein uS12 family. Part of the 30S ribosomal subunit. Contacts proteins S8 and S17. May interact with IF1 in the 30S initiation complex.

With S4 and S5 plays an important role in translational accuracy. Functionally, interacts with and stabilizes bases of the 16S rRNA that are involved in tRNA selection in the A site and with the mRNA backbone. Located at the interface of the 30S and 50S subunits, it traverses the body of the 30S subunit contacting proteins on the other side and probably holding the rRNA structure together. The combined cluster of proteins S8, S12 and S17 appears to hold together the shoulder and platform of the 30S subunit. In Orientia tsutsugamushi (strain Boryong) (Rickettsia tsutsugamushi), this protein is Small ribosomal subunit protein uS12.